Consider the following 70-residue polypeptide: Homeobox protein OTX2 (70 aa).

The segment at 34 to 70 (HQLPGPGATLSPMGTNAVTSHLNQSPASLSTQGYGAS) is disordered. The segment covering 45–70 (PMGTNAVTSHLNQSPASLSTQGYGAS) has biased composition (polar residues).

Belongs to the paired homeobox family. Bicoid subfamily.

Its subcellular location is the nucleus. In terms of biological role, transcription factor probably involved in the development of the brain and the sense organs. Can bind to the bicoid/BCD target sequence (BTS): 5'-TCTAATCCC-3'. This is Homeobox protein OTX2 (Otx2) from Rattus norvegicus (Rat).